The following is a 368-amino-acid chain: DNA integrity scanning protein DisA (368 aa).

The region spanning 15-153 (DERLRATLAA…DGRRHVLDEP (139 aa)) is the DAC domain. Residues G82, L100, and 113-117 (TRHRS) contribute to the ATP site. The tract at residues 101–121 (QPDPSIPTNESGTRHRSAERT) is disordered. Over residues 112–121 (GTRHRSAERT) the composition is skewed to basic and acidic residues.

Belongs to the DisA family. Homooctamer. It depends on Mg(2+) as a cofactor.

It catalyses the reaction 2 ATP = 3',3'-c-di-AMP + 2 diphosphate. In terms of biological role, participates in a DNA-damage check-point. DisA forms globular foci that rapidly scan along the chromosomes searching for lesions. Also has diadenylate cyclase activity, catalyzing the condensation of 2 ATP molecules into cyclic di-AMP (c-di-AMP). c-di-AMP likely acts as a signaling molecule that may couple DNA integrity with a cellular process. This is DNA integrity scanning protein DisA from Acidothermus cellulolyticus (strain ATCC 43068 / DSM 8971 / 11B).